Here is a 503-residue protein sequence, read N- to C-terminus: Maturase K (503 aa).

The protein belongs to the intron maturase 2 family. MatK subfamily.

Its subcellular location is the plastid. It localises to the chloroplast. Its function is as follows. Usually encoded in the trnK tRNA gene intron. Probably assists in splicing its own and other chloroplast group II introns. The polypeptide is Maturase K (Rosa gigantea (Giant tea rose)).